The following is a 230-amino-acid chain: Demethylmenaquinone methyltransferase (230 aa).

Residues Thr-57, Asp-77, Asp-101–Ile-102, and Ser-118 contribute to the S-adenosyl-L-methionine site.

The protein belongs to the class I-like SAM-binding methyltransferase superfamily. MenG/UbiE family.

The catalysed reaction is a 2-demethylmenaquinol + S-adenosyl-L-methionine = a menaquinol + S-adenosyl-L-homocysteine + H(+). It participates in quinol/quinone metabolism; menaquinone biosynthesis; menaquinol from 1,4-dihydroxy-2-naphthoate: step 2/2. In terms of biological role, methyltransferase required for the conversion of demethylmenaquinol (DMKH2) to menaquinol (MKH2). The protein is Demethylmenaquinone methyltransferase of Chlamydia caviae (strain ATCC VR-813 / DSM 19441 / 03DC25 / GPIC) (Chlamydophila caviae).